Reading from the N-terminus, the 173-residue chain is Putative 2-oxo-4-hydroxy-4-carboxy-5-ureidoimidazoline decarboxylase (173 aa).

The active-site Proton donor is the His-67. Substrate is bound by residues Pro-68, Ser-84–Gln-88, and Phe-119–Ala-123. The Microbody targeting signal motif lies at Ala-171 to Leu-173.

The protein belongs to the OHCU decarboxylase family. Apparently not expressed.

Its subcellular location is the peroxisome. It catalyses the reaction 5-hydroxy-2-oxo-4-ureido-2,5-dihydro-1H-imidazole-5-carboxylate + H(+) = (S)-allantoin + CO2. The protein operates within purine metabolism; urate degradation; (S)-allantoin from urate: step 3/3. Catalyzes the stereoselective decarboxylation of 2-oxo-4-hydroxy-4-carboxy-5-ureidoimidazoline (OHCU) to (S)-allantoin. In Homo sapiens (Human), this protein is Putative 2-oxo-4-hydroxy-4-carboxy-5-ureidoimidazoline decarboxylase (URAD).